The chain runs to 335 residues: Putative D-threonate 4-phosphate dehydrogenase (335 aa).

Positions 140 and 141 each coordinate substrate. Positions 170, 214, and 269 each coordinate a divalent metal cation. Positions 277 and 295 each coordinate substrate.

It belongs to the PdxA family. PdxA2 subfamily. In terms of assembly, homodimer. A divalent metal cation serves as cofactor.

The catalysed reaction is 4-O-phospho-D-threonate + NAD(+) = dihydroxyacetone phosphate + CO2 + NADH. Functionally, catalyzes the NAD-dependent oxidation and subsequent decarboxylation of D-threonate 4-phosphate to produce dihydroxyacetone phosphate (DHAP). The polypeptide is Putative D-threonate 4-phosphate dehydrogenase (Symbiobacterium thermophilum (strain DSM 24528 / JCM 14929 / IAM 14863 / T)).